A 533-amino-acid chain; its full sequence is Homeobox protein DTH-1 (533 aa).

Disordered regions lie at residues 1–28 and 308–378; these read MSSNGDSVKYDTNFDREGYSTDSSNECP and LPQN…GKKR. The span at 8-19 shows a compositional bias: basic and acidic residues; that stretch reads VKYDTNFDREGY. A compositionally biased stretch (low complexity) spans 308–317; that stretch reads LPQNLPNPNQ. Polar residues predominate over residues 318 to 333; it reads TDSIYSSSINENNQPI. The span at 360–371 shows a compositional bias: low complexity; it reads SVENNDNENSSS. Residues 377-436 constitute a DNA-binding region (homeobox); that stretch reads KRKRRVLFSKKQILELERHFRQKKYLSAPEREHLANLIGLSPTQVKIWFQNHRYKMKRAH.

This sequence belongs to the NK-2 homeobox family. As to expression, intestine and unidentified peripheral parenchymal cells. Slightly higher levels in the cephalic region compared to other body regions.

It localises to the nucleus. Its function is as follows. This protein might be involved in determination and/or differentiation of nerve cells in the continuous replacement of neurons in the cephalic region. In Girardia tigrina (Planarian), this protein is Homeobox protein DTH-1 (DTH-1).